The primary structure comprises 251 residues: tRNA (guanine-N(1)-)-methyltransferase (251 aa).

Residues Gly113 and 133–138 (IGDYVL) each bind S-adenosyl-L-methionine.

This sequence belongs to the RNA methyltransferase TrmD family. Homodimer.

It localises to the cytoplasm. It catalyses the reaction guanosine(37) in tRNA + S-adenosyl-L-methionine = N(1)-methylguanosine(37) in tRNA + S-adenosyl-L-homocysteine + H(+). Its function is as follows. Specifically methylates guanosine-37 in various tRNAs. In Pectobacterium atrosepticum (strain SCRI 1043 / ATCC BAA-672) (Erwinia carotovora subsp. atroseptica), this protein is tRNA (guanine-N(1)-)-methyltransferase.